A 28-amino-acid chain; its full sequence is Arylalkyl acylamidase (28 aa).

Homotetramer.

It catalyses the reaction an N-acetylarylalkylamine + H2O = an aralkylamine + acetate. With respect to regulation, activated by divalent metal ions. Inhibited by certain thiol reagents. Its function is as follows. Shows a strict specificity for N-acetyl arylalkylamines but not acetanilide derivatives. This Pseudomonas putida (Arthrobacter siderocapsulatus) protein is Arylalkyl acylamidase.